Consider the following 172-residue polypeptide: Folate transporter FolT (172 aa).

The next 5 membrane-spanning stretches (helical) occupy residues 6–26, 35–55, 71–91, 101–121, and 131–151; these read VMIY…FLSI, FGFI…AGIV, AYFP…GVFF, VLLA…TIWL, and VLFV…AIVI.

Forms a stable energy-coupling factor (ECF) transporter complex composed of a membrane-embedded substrate-binding protein (S component), two ATP-binding proteins (A components) and a transmembrane protein (T component).

It localises to the cell membrane. Folate-binding protein that interacts with the energy-coupling factor (ECF) ABC-transporter complex. Unlike classic ABC transporters this ECF transporter provides the energy necessary to transport a number of different substrates. The substrates themselves are bound by transmembrane, not extracytoplasmic soluble proteins. This is Folate transporter FolT (folT) from Clostridium novyi (strain NT).